The chain runs to 103 residues: Large ribosomal subunit protein bL21 (103 aa).

Belongs to the bacterial ribosomal protein bL21 family. In terms of assembly, part of the 50S ribosomal subunit. Contacts protein L20.

Functionally, this protein binds to 23S rRNA in the presence of protein L20. This chain is Large ribosomal subunit protein bL21, found in Rhodococcus erythropolis (strain PR4 / NBRC 100887).